Reading from the N-terminus, the 407-residue chain is S-adenosylmethionine synthase (407 aa).

His-15 contributes to the ATP binding site. Asp-17 is a Mg(2+) binding site. Glu-43 contacts K(+). The L-methionine site is built by Glu-56 and Gln-99. The tract at residues 99–109 (QSPDIARGVDT) is flexible loop. A disordered region spans residues 112–131 (ERRGGGTAPGGPGDELDRQG). ATP is bound by residues 179–181 (DGK), 252–253 (RF), Asp-261, 267–268 (RK), Ala-284, and Lys-288. Asp-261 is a binding site for L-methionine. Position 292 (Lys-292) interacts with L-methionine.

This sequence belongs to the AdoMet synthase family. As to quaternary structure, homotetramer; dimer of dimers. It depends on Mg(2+) as a cofactor. The cofactor is K(+).

It localises to the cytoplasm. It carries out the reaction L-methionine + ATP + H2O = S-adenosyl-L-methionine + phosphate + diphosphate. It functions in the pathway amino-acid biosynthesis; S-adenosyl-L-methionine biosynthesis; S-adenosyl-L-methionine from L-methionine: step 1/1. In terms of biological role, catalyzes the formation of S-adenosylmethionine (AdoMet) from methionine and ATP. The overall synthetic reaction is composed of two sequential steps, AdoMet formation and the subsequent tripolyphosphate hydrolysis which occurs prior to release of AdoMet from the enzyme. The polypeptide is S-adenosylmethionine synthase (Streptomyces fradiae (Streptomyces roseoflavus)).